Here is a 94-residue protein sequence, read N- to C-terminus: uncharacterized protein (94 aa).

A helical membrane pass occupies residues 13–33 (IVICLTTIISVTIFYILVSFF).

It is found in the membrane. This is an uncharacterized protein from Dictyostelium discoideum (Social amoeba).